Reading from the N-terminus, the 241-residue chain is DNA repair protein RecO (241 aa).

Belongs to the RecO family.

Involved in DNA repair and RecF pathway recombination. In Orientia tsutsugamushi (strain Ikeda) (Rickettsia tsutsugamushi), this protein is DNA repair protein RecO.